The chain runs to 393 residues: Methylthioribose kinase (393 aa).

ATP is bound by residues N38, K53, and 107-109; that span reads EDL. D225 lines the substrate pocket. Position 242–244 (242–244) interacts with ATP; the sequence is DPE. R332 contributes to the substrate binding site.

It belongs to the methylthioribose kinase family. In terms of assembly, homodimer.

The enzyme catalyses 5-(methylsulfanyl)-D-ribose + ATP = 5-(methylsulfanyl)-alpha-D-ribose 1-phosphate + ADP + H(+). It functions in the pathway amino-acid biosynthesis; L-methionine biosynthesis via salvage pathway; S-methyl-5-thio-alpha-D-ribose 1-phosphate from S-methyl-5'-thioadenosine (hydrolase route): step 2/2. In terms of biological role, catalyzes the phosphorylation of methylthioribose into methylthioribose-1-phosphate. The polypeptide is Methylthioribose kinase (Bacillus cereus (strain G9842)).